The primary structure comprises 60 residues: UPF0391 membrane protein CCNA_00709 (60 aa).

A run of 2 helical transmembrane segments spans residues 4–24 (WAIILAIVALIAGALGFSGLA) and 33–53 (ILFFLFLVGFVLVLLLGGTVF).

This sequence belongs to the UPF0391 family.

The protein resides in the cell membrane. This is UPF0391 membrane protein CCNA_00709 from Caulobacter vibrioides (strain NA1000 / CB15N) (Caulobacter crescentus).